Here is a 474-residue protein sequence, read N- to C-terminus: MAYTQSKSQKVGYQAGVKDYRLTYYTPDYTPKDTDILAAFRVTPQPGVPFEEAAAAVAAESSTGTWTTVWTDLLTDLDRYKGRCYDIEPLPGEDNQFIAYIAYPLDLFEEGSVTNMLTSIVGNVFGFKALKALRLEDLRIPVAYLKTFQGPPHGIQVERDKLNKYGRPLLGCTIKPKLGLSAKNYGRAVYECLRGGLDFTKDDENINSQPFQRWRDRFLFVADAIHKAQAETGEIKGHYLNVTAPTCEEMLKRAEFAKDWNAIIMHDFLTAGFTANTTLSKGCRDNGMLLHIHRAMHAVMDRQKNHGIHFRVLAKCLRMSGGDHIHTGTVVGKLEGDKAVTLGFVDLLRENYIEQDRSRGIYFTQDWASMPGVMAVASGGIHVWHMPALVDIFGDDAVLQFGGGTLGHPWGNAPGATANRVALEACIQARNEGRDLMREGGDIIREAARWSPELAAACELWKEIKFEFEAQDTI.

Residues Asn-123 and Thr-173 each contribute to the substrate site. Lys-175 serves as the catalytic Proton acceptor. Lys-177 is a substrate binding site. Residues Lys-201, Asp-203, and Glu-204 each coordinate Mg(2+). The residue at position 201 (Lys-201) is an N6-carboxylysine. His-293 functions as the Proton acceptor in the catalytic mechanism. Positions 294, 326, and 378 each coordinate substrate.

It belongs to the RuBisCO large chain family. Type I subfamily. As to quaternary structure, heterohexadecamer of 8 large chains and 8 small chains; disulfide-linked. The disulfide link is formed within the large subunit homodimers. It depends on Mg(2+) as a cofactor. In terms of processing, the disulfide bond which can form in the large chain dimeric partners within the hexadecamer appears to be associated with oxidative stress and protein turnover.

The protein localises to the carboxysome. The catalysed reaction is 2 (2R)-3-phosphoglycerate + 2 H(+) = D-ribulose 1,5-bisphosphate + CO2 + H2O. It carries out the reaction D-ribulose 1,5-bisphosphate + O2 = 2-phosphoglycolate + (2R)-3-phosphoglycerate + 2 H(+). Its function is as follows. RuBisCO catalyzes two reactions: the carboxylation of D-ribulose 1,5-bisphosphate, the primary event in carbon dioxide fixation, as well as the oxidative fragmentation of the pentose substrate in the photorespiration process. Both reactions occur simultaneously and in competition at the same active site. This chain is Ribulose bisphosphate carboxylase large chain, found in Synechococcus sp.